The chain runs to 563 residues: Adenine deaminase (563 aa).

The protein belongs to the metallo-dependent hydrolases superfamily. Adenine deaminase family. Requires Mn(2+) as cofactor.

It carries out the reaction adenine + H2O + H(+) = hypoxanthine + NH4(+). This is Adenine deaminase from Lactiplantibacillus plantarum (strain ATCC BAA-793 / NCIMB 8826 / WCFS1) (Lactobacillus plantarum).